The following is a 637-amino-acid chain: 3D-(3,5/4)-trihydroxycyclohexane-1,2-dione hydrolase (637 aa).

Glutamate 66 contacts thiamine diphosphate. The thiamine pyrophosphate binding stretch occupies residues 442–522 (SLPGDLQRLW…INVLLFDNSG (81 aa)). Mg(2+) is bound by residues aspartate 493 and asparagine 520.

Belongs to the TPP enzyme family. Mg(2+) is required as a cofactor. Requires thiamine diphosphate as cofactor.

It carries out the reaction 3D-3,5/4-trihydroxycyclohexane-1,2-dione + H2O = 5-deoxy-D-glucuronate + H(+). It participates in polyol metabolism; myo-inositol degradation into acetyl-CoA; acetyl-CoA from myo-inositol: step 3/7. In terms of biological role, involved in the cleavage of the C1-C2 bond of 3D-(3,5/4)-trihydroxycyclohexane-1,2-dione (THcHDO) to yield 5-deoxy-glucuronate (5DG). The sequence is that of 3D-(3,5/4)-trihydroxycyclohexane-1,2-dione hydrolase from Bacillus velezensis (strain DSM 23117 / BGSC 10A6 / LMG 26770 / FZB42) (Bacillus amyloliquefaciens subsp. plantarum).